Here is a 27-residue protein sequence, read N- to C-terminus: Conotoxin Lo6/7b (27 aa).

3 cysteine pairs are disulfide-bonded: cysteine 2–cysteine 16, cysteine 9–cysteine 19, and cysteine 15–cysteine 26. Position 27 is a tyrosine amide (tyrosine 27).

In terms of tissue distribution, expressed by the venom duct.

Its subcellular location is the secreted. Its function is as follows. 1 uM of this toxin does not show any effect on voltage-gated sodium and potassium channels. Does not show antibacterial activity on both Gram-negative and Gram-positive bacteria. This Conasprella longurionis (Cone snail) protein is Conotoxin Lo6/7b.